The primary structure comprises 258 residues: Type III pantothenate kinase (258 aa).

6–13 is an ATP binding site; it reads DVGNSDTV. Substrate is bound at residue 108-111; the sequence is GSDR. Catalysis depends on Asp110, which acts as the Proton acceptor. Asp130 is a binding site for K(+). Thr133 provides a ligand contact to ATP. Thr185 is a substrate binding site.

This sequence belongs to the type III pantothenate kinase family. In terms of assembly, homodimer. Requires NH4(+) as cofactor. K(+) is required as a cofactor.

It is found in the cytoplasm. The catalysed reaction is (R)-pantothenate + ATP = (R)-4'-phosphopantothenate + ADP + H(+). Its pathway is cofactor biosynthesis; coenzyme A biosynthesis; CoA from (R)-pantothenate: step 1/5. Its function is as follows. Catalyzes the phosphorylation of pantothenate (Pan), the first step in CoA biosynthesis. The protein is Type III pantothenate kinase of Thermobifida fusca (strain YX).